A 654-amino-acid chain; its full sequence is Translation factor GUF1, mitochondrial (654 aa).

The tr-type G domain maps to 57–237; that stretch reads ENYRNFSIVA…SVIKNIPSPV (181 aa). GTP is bound by residues 66–73, 130–134, and 184–187; these read AHVDHGKS, DTPGH, and NKID.

The protein belongs to the TRAFAC class translation factor GTPase superfamily. Classic translation factor GTPase family. LepA subfamily.

It is found in the mitochondrion inner membrane. It carries out the reaction GTP + H2O = GDP + phosphate + H(+). Functionally, promotes mitochondrial protein synthesis. May act as a fidelity factor of the translation reaction, by catalyzing a one-codon backward translocation of tRNAs on improperly translocated ribosomes. Binds to mitochondrial ribosomes in a GTP-dependent manner. This Candida albicans (strain WO-1) (Yeast) protein is Translation factor GUF1, mitochondrial.